Here is a 243-residue protein sequence, read N- to C-terminus: Derlin-1.2 (243 aa).

Over 1 to 20 the chain is Cytoplasmic; it reads MSSPAEYYKSLPPISKAYGT. A helical transmembrane segment spans residues 21-41; sequence LCFFTTVLVRLHILNPLFLYL. Over 42 to 54 the chain is Lumenal; it reads YYPRVFKKFEVWR. Residues 55 to 75 form a helical membrane-spanning segment; it reads IFTSFFFLGPFSINFGIRLLM. Residues 76–94 are Cytoplasmic-facing; that stretch reads IARYGVMLEKGAFDKRTAD. The helical transmembrane segment at 95 to 115 threads the bilayer; that stretch reads FLWMMIFGAISLLVLSVIPQL. The Lumenal portion of the chain corresponds to 116-155; sequence NTYVLGLPMVSMLVYVWSRENPNAQINIYGILQLKAFYLP. A helical membrane pass occupies residues 156–176; that stretch reads WVMLLLDVIFGSPLMPGLLGI. The Cytoplasmic segment spans residues 177-243; the sequence is MVGHLYYYFA…FRGRSYRLNQ (67 aa).

This sequence belongs to the derlin family. Expressed in roots and endosperm.

The protein localises to the endoplasmic reticulum membrane. In terms of biological role, may be involved in the degradation process of specific misfolded endoplasmic reticulum (ER) luminal proteins. This is Derlin-1.2 (DER1.2) from Zea mays (Maize).